The primary structure comprises 1006 residues: DNA polymerase (1006 aa).

It belongs to the DNA polymerase type-B family. As to quaternary structure, interacts with OPG148. Component of the Uracil-DNA glycosylase(UDG)-OPG148-polymerase complex; OPG148 and OPG116/UDG form a heterodimeric processivity factor that associates with OPG071 to form the processive polymerase holoenzyme.

It catalyses the reaction DNA(n) + a 2'-deoxyribonucleoside 5'-triphosphate = DNA(n+1) + diphosphate. Catalyzes DNA synthesis. Acquires processivity by associating with a heterodimeric processivity factor comprised of the viral OPG148 and OPG116 proteins, thereby forming the DNA polymerase holoenzyme. Displays 3'- to 5' exonuclease activity. Might participate in viral DNA recombination. Does not perform OPG116/D4synthesis across an abasic site. This chain is DNA polymerase (OPG071), found in Homo sapiens (Human).